The sequence spans 69 residues: Large ribosomal subunit protein bL31 (69 aa).

Zn(2+) contacts are provided by Cys17, Cys19, Cys37, and Cys40.

This sequence belongs to the bacterial ribosomal protein bL31 family. Type A subfamily. In terms of assembly, part of the 50S ribosomal subunit. Zn(2+) is required as a cofactor.

Binds the 23S rRNA. The sequence is that of Large ribosomal subunit protein bL31 from Caldicellulosiruptor saccharolyticus (strain ATCC 43494 / DSM 8903 / Tp8T 6331).